The sequence spans 141 residues: Protein NrdI (141 aa).

This sequence belongs to the NrdI family.

Functionally, probably involved in ribonucleotide reductase function. This Bifidobacterium animalis subsp. lactis (strain AD011) protein is Protein NrdI.